Consider the following 211-residue polypeptide: Dual specificity protein phosphatase 26 (211 aa).

The region spanning 60 to 207 is the Tyrosine-protein phosphatase domain; sequence NHADEVWPGL…LLALDRRLRQ (148 aa). The active-site Phosphocysteine intermediate is the Cys-152.

The protein belongs to the protein-tyrosine phosphatase family. Non-receptor class dual specificity subfamily. Interacts with HSF4.

Its subcellular location is the cytoplasm. It is found in the nucleus. It localises to the golgi apparatus. It carries out the reaction O-phospho-L-tyrosyl-[protein] + H2O = L-tyrosyl-[protein] + phosphate. The enzyme catalyses O-phospho-L-seryl-[protein] + H2O = L-seryl-[protein] + phosphate. The catalysed reaction is O-phospho-L-threonyl-[protein] + H2O = L-threonyl-[protein] + phosphate. In terms of biological role, inactivates MAPK1 and MAPK3 which leads to dephosphorylation of heat shock factor protein 4 and a reduction in its DNA-binding activity. This Bos taurus (Bovine) protein is Dual specificity protein phosphatase 26 (DUSP26).